Here is an 82-residue protein sequence, read N- to C-terminus: Small ribosomal subunit protein uS17 (82 aa).

This sequence belongs to the universal ribosomal protein uS17 family. In terms of assembly, part of the 30S ribosomal subunit.

One of the primary rRNA binding proteins, it binds specifically to the 5'-end of 16S ribosomal RNA. This Afipia carboxidovorans (strain ATCC 49405 / DSM 1227 / KCTC 32145 / OM5) (Oligotropha carboxidovorans) protein is Small ribosomal subunit protein uS17.